The following is a 260-amino-acid chain: Imidazole glycerol phosphate synthase subunit HisF (260 aa).

Catalysis depends on residues Asp11 and Asp130.

This sequence belongs to the HisA/HisF family. As to quaternary structure, heterodimer of HisH and HisF.

The protein resides in the cytoplasm. The enzyme catalyses 5-[(5-phospho-1-deoxy-D-ribulos-1-ylimino)methylamino]-1-(5-phospho-beta-D-ribosyl)imidazole-4-carboxamide + L-glutamine = D-erythro-1-(imidazol-4-yl)glycerol 3-phosphate + 5-amino-1-(5-phospho-beta-D-ribosyl)imidazole-4-carboxamide + L-glutamate + H(+). It functions in the pathway amino-acid biosynthesis; L-histidine biosynthesis; L-histidine from 5-phospho-alpha-D-ribose 1-diphosphate: step 5/9. Functionally, IGPS catalyzes the conversion of PRFAR and glutamine to IGP, AICAR and glutamate. The HisF subunit catalyzes the cyclization activity that produces IGP and AICAR from PRFAR using the ammonia provided by the HisH subunit. In Psychrobacter arcticus (strain DSM 17307 / VKM B-2377 / 273-4), this protein is Imidazole glycerol phosphate synthase subunit HisF.